Reading from the N-terminus, the 389-residue chain is viridiflorene synthase Agr2 (389 aa).

The signal sequence occupies residues 1–15 (MVWDFVLSLFHSLLA). Mg(2+) is bound by residues Asp-128, Asn-263, Ser-267, and Glu-271. The DDXXD motif motif lies at 128-132 (DEVTD). Residues Arg-360 and Tyr-361 each coordinate (2E,6E)-farnesyl diphosphate.

This sequence belongs to the terpene synthase family. Requires Mg(2+) as cofactor.

It carries out the reaction (2E,6E)-farnesyl diphosphate = viridiflorene + diphosphate. Terpene cyclase that catalyzes the cyclization of farnesyl diphosphate (FPP) to viridiflorene. This chain is viridiflorene synthase Agr2, found in Cyclocybe aegerita (Black poplar mushroom).